The primary structure comprises 322 residues: Ribose-phosphate pyrophosphokinase 1 (322 aa).

Residues 39 to 41 (DGE) and 98 to 99 (RQ) contribute to the ATP site. The Mg(2+) site is built by histidine 132 and aspartate 173. Lysine 196 is a catalytic residue. Residues arginine 198, aspartate 224, and 228–232 (DTAGT) contribute to the D-ribose 5-phosphate site.

It belongs to the ribose-phosphate pyrophosphokinase family. Class I subfamily. Homohexamer. Mg(2+) is required as a cofactor.

The protein resides in the cytoplasm. The enzyme catalyses D-ribose 5-phosphate + ATP = 5-phospho-alpha-D-ribose 1-diphosphate + AMP + H(+). Its pathway is metabolic intermediate biosynthesis; 5-phospho-alpha-D-ribose 1-diphosphate biosynthesis; 5-phospho-alpha-D-ribose 1-diphosphate from D-ribose 5-phosphate (route I): step 1/1. Involved in the biosynthesis of the central metabolite phospho-alpha-D-ribosyl-1-pyrophosphate (PRPP) via the transfer of pyrophosphoryl group from ATP to 1-hydroxyl of ribose-5-phosphate (Rib-5-P). In Streptococcus mutans serotype c (strain ATCC 700610 / UA159), this protein is Ribose-phosphate pyrophosphokinase 1.